The chain runs to 70 residues: MRAIIYLLLISAMVFSMTKAVPEEEGLQLSEDERGGCLPHNRFCNALSGPRCCSGLKCKELSIYDSRCLG.

The N-terminal stretch at 1 to 20 (MRAIIYLLLISAMVFSMTKA) is a signal peptide. Residues 21–34 (VPEEEGLQLSEDER) constitute a propeptide that is removed on maturation. Cystine bridges form between Cys-37–Cys-53, Cys-44–Cys-58, and Cys-52–Cys-68. Residue Leu-69 is modified to Leucine amide.

The protein belongs to the neurotoxin 01 (U2-agtx) family. Expressed by the venom gland.

The protein localises to the secreted. Functionally, insect active toxin causing rapid but reversible paralysis in crickets. No activity shown in mammals. Does not show effect on mammalian voltage-gated calcium channels. This Agelena orientalis (Funnel-web spider) protein is U2-agatoxin-Ao1d.